The primary structure comprises 276 residues: Rhomboid protease GlpG (276 aa).

Helical transmembrane passes span 96-116 (VTWLIMIACILVFVVMSIVGA), 142-162 (AFMHFSLMHILFNLLWWWYIG), 169-189 (LGSGKLIVITVISALLSGYVQ), 192-212 (FSGPWFGGLSGVVYALMGYAW), 229-249 (LIAFALIWIVAGWFDVFGMSM), and 250-270 (ANGAHIAGLAVGLAMAFADTV). Ser-201 functions as the Nucleophile in the catalytic mechanism. His-254 is a catalytic residue.

The protein belongs to the peptidase S54 family.

It localises to the cell inner membrane. The enzyme catalyses Cleaves type-1 transmembrane domains using a catalytic dyad composed of serine and histidine that are contributed by different transmembrane domains.. Functionally, rhomboid-type serine protease that catalyzes intramembrane proteolysis. This Citrobacter koseri (strain ATCC BAA-895 / CDC 4225-83 / SGSC4696) protein is Rhomboid protease GlpG.